A 302-amino-acid polypeptide reads, in one-letter code: Quinolinate synthase (302 aa).

Residues H24 and S41 each contribute to the iminosuccinate site. C86 contributes to the [4Fe-4S] cluster binding site. Residues 112–114 and S129 each bind iminosuccinate; that span reads YVN. Residue C171 coordinates [4Fe-4S] cluster. Iminosuccinate is bound by residues 197-199 and T214; that span reads HPE. C259 is a [4Fe-4S] cluster binding site.

Belongs to the quinolinate synthase family. Type 2 subfamily. Requires [4Fe-4S] cluster as cofactor.

Its subcellular location is the cytoplasm. It catalyses the reaction iminosuccinate + dihydroxyacetone phosphate = quinolinate + phosphate + 2 H2O + H(+). Its pathway is cofactor biosynthesis; NAD(+) biosynthesis; quinolinate from iminoaspartate: step 1/1. Its function is as follows. Catalyzes the condensation of iminoaspartate with dihydroxyacetone phosphate to form quinolinate. The polypeptide is Quinolinate synthase (Dehalococcoides mccartyi (strain CBDB1)).